The following is a 561-amino-acid chain: Probable oligo-1,6-glucosidase 2 (561 aa).

Asp-199 serves as the catalytic Nucleophile. The active-site Proton donor is the Glu-255.

The protein belongs to the glycosyl hydrolase 13 family.

The protein localises to the cytoplasm. The catalysed reaction is Hydrolysis of (1-&gt;6)-alpha-D-glucosidic linkages in some oligosaccharides produced from starch and glycogen by alpha-amylase, and in isomaltose.. This Bacillus subtilis (strain 168) protein is Probable oligo-1,6-glucosidase 2 (ycdG).